We begin with the raw amino-acid sequence, 2063 residues long: Nuclear receptor coactivator 6 (2063 aa).

A TBP/GTF2A-binding region region spans residues methionine 1–glutamine 928. Residues methionine 1–proline 1057 form a CREBBP-binding region region. The tract at residues methionine 1 to valine 1310 is NCOA1-binding region. Residue arginine 95 is modified to Asymmetric dimethylarginine. Disordered stretches follow at residues isoleucine 184 to glutamine 251, glutamine 281 to leucine 549, and arginine 789 to aspartate 811. Residues glutamine 281–glutamine 300 show a composition bias toward low complexity. Polar residues-rich tracts occupy residues methionine 353 to threonine 368, glycine 379 to serine 406, proline 417 to methionine 453, proline 462 to glutamine 502, and glycine 522 to leucine 549. The segment at valine 773–glutamine 927 is NCOA6IP-binding region. A Phosphoserine; by MAPK; in vitro modification is found at serine 884. Positions leucine 887–leucine 891 match the LXXLL motif 1 motif. 3 disordered regions span residues histidine 899–threonine 1278, valine 1310–lysine 1353, and glutamate 1448–glutamate 1474. Low complexity predominate over residues asparagine 903 to asparagine 912. Over residues lysine 913–asparagine 925 the composition is skewed to basic residues. Low complexity predominate over residues proline 982–glutamine 992. The segment covering alanine 995–glutamine 1020 has biased composition (pro residues). The segment covering proline 1021 to glutamine 1041 has biased composition (low complexity). Asymmetric dimethylarginine is present on residues arginine 1047 and arginine 1058. Over residues proline 1063–serine 1075 the composition is skewed to polar residues. Residue arginine 1096 is modified to Asymmetric dimethylarginine. Composition is skewed to polar residues over residues proline 1104 to proline 1125, leucine 1173 to serine 1191, and alanine 1202 to arginine 1214. Pro residues predominate over residues proline 1219–threonine 1232. The segment covering valine 1310–alanine 1320 has biased composition (polar residues). The span at lysine 1322–glycine 1345 shows a compositional bias: low complexity. The LXXLL motif 2 signature appears at leucine 1491–leucine 1495. The tract at residues serine 1641–lysine 2063 is EP300/CRSP3-binding region. Residues alanine 1738–valine 1820 form a disordered region. Positions serine 1750 to valine 1763 are enriched in low complexity. Polar residues predominate over residues proline 1773–threonine 1798. Residues asparagine 1799–lysine 1815 are compositionally biased toward low complexity. An N6-acetyllysine mark is found at lysine 1819 and lysine 1822. Disordered regions lie at residues glycine 1837–glycine 1908 and isoleucine 1995–lysine 2063. Residues glutamate 2002–lysine 2011 show a composition bias toward basic and acidic residues. Serine 2018 is modified (phosphoserine).

Monomer and homodimer. Interacts with RBM39. Interacts in vitro with the basal transcription factors GTF2A and TBP, suggesting an autonomous transactivation function. Interacts with NCOA1, CRSP3, RBM14, the histone acetyltransferases EP300 and CREBBP, and with the methyltransferases NCOA6IP and PRMT2/HRMT1L1. Component of the MLL2/3 complex (also named ASCOM complex), at least composed of KMT2D/MLL2 or KMT2C/MLL3, ASH2L, RBBP5, WDR5, NCOA6, DPY30, KDM6A, PAXIP1/PTIP, PAGR1 and alpha- and beta-tubulin. Interacts with ZNF335; may enhance ligand-dependent transcriptional activation by nuclear hormone receptors. In terms of processing, phosphorylated by PRKDC. Post-translationally, phosphorylation on Ser-884 leads to a strong decrease in binding to ESR1 and ESR2. In terms of tissue distribution, ubiquitous. Highly expressed in brain, prostate, testis and ovary; weakly expressed in lung, thymus and small intestine.

The protein localises to the nucleus. Functionally, nuclear receptor coactivator that directly binds nuclear receptors and stimulates the transcriptional activities in a hormone-dependent fashion. Coactivates expression in an agonist- and AF2-dependent manner. Involved in the coactivation of different nuclear receptors, such as for steroids (GR and ERs), retinoids (RARs and RXRs), thyroid hormone (TRs), vitamin D3 (VDR) and prostanoids (PPARs). Probably functions as a general coactivator, rather than just a nuclear receptor coactivator. May also be involved in the coactivation of the NF-kappa-B pathway. May coactivate expression via a remodeling of chromatin and its interaction with histone acetyltransferase proteins. The chain is Nuclear receptor coactivator 6 (NCOA6) from Homo sapiens (Human).